A 660-amino-acid polypeptide reads, in one-letter code: RalBP1-associated Eps domain-containing protein 2 (660 aa).

Residues 34-147 (EQQCYSELFA…RFMMSKNDGE (114 aa)) enclose the EH 1 domain. A disordered region spans residues 169–208 (EKNSFKRMDDEDKQQETQSPTMSPLASPPSSPPHYQRVPL). A Phosphoserine modification is found at S254. In terms of domain architecture, EH 2 spans 282–373 (QREYYVNQFR…LQPEYLQAAF (92 aa)). Positions 315–350 (LSIPELSYIWELSDADCDGALTLPEFCAAFHLIVAR) constitute an EF-hand domain. Residues D328, D330, D332, and E339 each coordinate Ca(2+). The tract at residues 433–616 (NEALPKDVSE…KQKKAIQTAI (184 aa)) is disordered. At T479 the chain carries Phosphothreonine. S493 is subject to Phosphoserine. The span at 512 to 523 (LPPPPALPPRPC) shows a compositional bias: pro residues. Residues 514-660 (PPPALPPRPC…LEQLRPVTVL (147 aa)) form an interaction with RALBP1 region. The segment at 561–660 (PPSKPIRRKF…LEQLRPVTVL (100 aa)) is interaction with ASAP1. Positions 582-594 (PSTAASGPASAAT) are enriched in low complexity. The stretch at 601–657 (VQKQSSKQKKAIQTAIRKNKEANAVLARLNSELQQQLKEVHQERIALENQLEQLRPV) forms a coiled coil.

As to quaternary structure, interacts with EPN1; the interaction is direct. Interacts with EPS15; the interaction is direct. Interacts with EPS15L1. Interacts with RALBP1; can form a ternary complex with activated Ral (RALA or RALB). Interacts with ASAP1; the interaction is direct and this complex can bind paxillin. Also forms a ternary complex with RALBP1 and ASAP1. Interacts with GRB2. In terms of processing, tyrosine-phosphorylated upon stimulation of cells with EGF. Phosphorylation on Tyr-residues induces its association with the EGF receptor probably indirectly through an adapter like GRB2. In terms of tissue distribution, expressed at high levels in the cerebrum, cerebellum, lung, kidney, and testis. Weakly expressed in the kidney. Isoform 2 is down-regulated during progression of prostate cancer.

It is found in the cytoplasm. Involved in ligand-dependent receptor mediated endocytosis of the EGF and insulin receptors as part of the Ral signaling pathway. By controlling growth factor receptors endocytosis may regulate cell survival. Through ASAP1 may regulate cell adhesion and migration. The protein is RalBP1-associated Eps domain-containing protein 2 (REPS2) of Homo sapiens (Human).